Consider the following 336-residue polypeptide: Anthranilate phosphoribosyltransferase (336 aa).

5-phospho-alpha-D-ribose 1-diphosphate contacts are provided by residues G82, 85 to 86 (GD), T90, 92 to 95 (NIST), 110 to 118 (KHGNRSVSS), and S122. G82 is a binding site for anthranilate. S94 contacts Mg(2+). N113 provides a ligand contact to anthranilate. R168 is a binding site for anthranilate. D227 and E228 together coordinate Mg(2+).

The protein belongs to the anthranilate phosphoribosyltransferase family. Homodimer. It depends on Mg(2+) as a cofactor.

It catalyses the reaction N-(5-phospho-beta-D-ribosyl)anthranilate + diphosphate = 5-phospho-alpha-D-ribose 1-diphosphate + anthranilate. It functions in the pathway amino-acid biosynthesis; L-tryptophan biosynthesis; L-tryptophan from chorismate: step 2/5. In terms of biological role, catalyzes the transfer of the phosphoribosyl group of 5-phosphorylribose-1-pyrophosphate (PRPP) to anthranilate to yield N-(5'-phosphoribosyl)-anthranilate (PRA). This Leptospira interrogans serogroup Icterohaemorrhagiae serovar copenhageni (strain Fiocruz L1-130) protein is Anthranilate phosphoribosyltransferase.